The following is a 97-amino-acid chain: UPF0125 protein plu3376 (97 aa).

This sequence belongs to the UPF0125 (RnfH) family.

The sequence is that of UPF0125 protein plu3376 from Photorhabdus laumondii subsp. laumondii (strain DSM 15139 / CIP 105565 / TT01) (Photorhabdus luminescens subsp. laumondii).